The following is a 291-amino-acid chain: ATP synthase gamma chain (291 aa).

The protein belongs to the ATPase gamma chain family. In terms of assembly, F-type ATPases have 2 components, CF(1) - the catalytic core - and CF(0) - the membrane proton channel. CF(1) has five subunits: alpha(3), beta(3), gamma(1), delta(1), epsilon(1). CF(0) has three main subunits: a, b and c.

It localises to the cell membrane. Produces ATP from ADP in the presence of a proton gradient across the membrane. The gamma chain is believed to be important in regulating ATPase activity and the flow of protons through the CF(0) complex. This is ATP synthase gamma chain from Streptococcus pyogenes serotype M1.